We begin with the raw amino-acid sequence, 196 residues long: ATP-dependent Clp protease proteolytic subunit 1 (196 aa).

Ser-96 serves as the catalytic Nucleophile. Residue His-121 is part of the active site.

It belongs to the peptidase S14 family. Fourteen ClpP subunits assemble into 2 heptameric rings which stack back to back to give a disk-like structure with a central cavity, resembling the structure of eukaryotic proteasomes.

Its subcellular location is the cytoplasm. It carries out the reaction Hydrolysis of proteins to small peptides in the presence of ATP and magnesium. alpha-casein is the usual test substrate. In the absence of ATP, only oligopeptides shorter than five residues are hydrolyzed (such as succinyl-Leu-Tyr-|-NHMec, and Leu-Tyr-Leu-|-Tyr-Trp, in which cleavage of the -Tyr-|-Leu- and -Tyr-|-Trp bonds also occurs).. Functionally, cleaves peptides in various proteins in a process that requires ATP hydrolysis. Has a chymotrypsin-like activity. Plays a major role in the degradation of misfolded proteins. The chain is ATP-dependent Clp protease proteolytic subunit 1 from Prochlorococcus marinus subsp. pastoris (strain CCMP1986 / NIES-2087 / MED4).